A 414-amino-acid chain; its full sequence is Tryptophan synthase beta chain (414 aa).

The segment covering 1–26 (MVSTFSRKDQNYKNDDLNQPSKEGRF) has biased composition (basic and acidic residues). A disordered region spans residues 1–27 (MVSTFSRKDQNYKNDDLNQPSKEGRFG). At Lys109 the chain carries N6-(pyridoxal phosphate)lysine.

It belongs to the TrpB family. Tetramer of two alpha and two beta chains. The cofactor is pyridoxal 5'-phosphate.

It carries out the reaction (1S,2R)-1-C-(indol-3-yl)glycerol 3-phosphate + L-serine = D-glyceraldehyde 3-phosphate + L-tryptophan + H2O. The protein operates within amino-acid biosynthesis; L-tryptophan biosynthesis; L-tryptophan from chorismate: step 5/5. The beta subunit is responsible for the synthesis of L-tryptophan from indole and L-serine. This is Tryptophan synthase beta chain from Prochlorococcus marinus (strain MIT 9301).